The sequence spans 142 residues: Transcriptional regulator MraZ (142 aa).

SpoVT-AbrB domains follow at residues 5-47 (THTP…PAPE) and 76-119 (AHDE…DRVA).

The protein belongs to the MraZ family. As to quaternary structure, forms oligomers.

Its subcellular location is the cytoplasm. It localises to the nucleoid. The sequence is that of Transcriptional regulator MraZ from Salinispora arenicola (strain CNS-205).